A 424-amino-acid polypeptide reads, in one-letter code: Light-independent protochlorophyllide reductase subunit N (424 aa).

Cysteine 16, cysteine 41, and cysteine 102 together coordinate [4Fe-4S] cluster.

This sequence belongs to the BchN/ChlN family. As to quaternary structure, protochlorophyllide reductase is composed of three subunits; ChlL, ChlN and ChlB. Forms a heterotetramer of two ChlB and two ChlN subunits. [4Fe-4S] cluster is required as a cofactor.

It carries out the reaction chlorophyllide a + oxidized 2[4Fe-4S]-[ferredoxin] + 2 ADP + 2 phosphate = protochlorophyllide a + reduced 2[4Fe-4S]-[ferredoxin] + 2 ATP + 2 H2O. Its pathway is porphyrin-containing compound metabolism; chlorophyll biosynthesis (light-independent). Component of the dark-operative protochlorophyllide reductase (DPOR) that uses Mg-ATP and reduced ferredoxin to reduce ring D of protochlorophyllide (Pchlide) to form chlorophyllide a (Chlide). This reaction is light-independent. The NB-protein (ChlN-ChlB) is the catalytic component of the complex. In Synechococcus sp. (strain WH7803), this protein is Light-independent protochlorophyllide reductase subunit N.